A 503-amino-acid polypeptide reads, in one-letter code: ATP synthase subunit alpha (503 aa).

Residue 170-177 (GDKQTGKT) participates in ATP binding.

The protein belongs to the ATPase alpha/beta chains family. As to quaternary structure, F-type ATPases have 2 components, CF(1) - the catalytic core - and CF(0) - the membrane proton channel. CF(1) has five subunits: alpha(3), beta(3), gamma(1), delta(1), epsilon(1). CF(0) has three main subunits: a(1), b(2) and c(9-12). The alpha and beta chains form an alternating ring which encloses part of the gamma chain. CF(1) is attached to CF(0) by a central stalk formed by the gamma and epsilon chains, while a peripheral stalk is formed by the delta and b chains.

It localises to the cell inner membrane. It catalyses the reaction ATP + H2O + 4 H(+)(in) = ADP + phosphate + 5 H(+)(out). In terms of biological role, produces ATP from ADP in the presence of a proton gradient across the membrane. The alpha chain is a regulatory subunit. This chain is ATP synthase subunit alpha, found in Helicobacter acinonychis (strain Sheeba).